A 105-amino-acid chain; its full sequence is Large ribosomal subunit protein uL24 (105 aa).

Belongs to the universal ribosomal protein uL24 family. In terms of assembly, part of the 50S ribosomal subunit.

Its function is as follows. One of two assembly initiator proteins, it binds directly to the 5'-end of the 23S rRNA, where it nucleates assembly of the 50S subunit. Functionally, one of the proteins that surrounds the polypeptide exit tunnel on the outside of the subunit. In Francisella philomiragia subsp. philomiragia (strain ATCC 25017 / CCUG 19701 / FSC 153 / O#319-036), this protein is Large ribosomal subunit protein uL24.